Reading from the N-terminus, the 330-residue chain is MNNYFSMEAFDYDDIQLVPNKAIVNSRKECVTSVKFGNRTFKIPVVPANMESVIDEKLAVWLAQNGYYYVMHRFQPEKRADFIKMMHEKGLFASISVGIKDDEYDFIDELVEKDLIPEYTTIDVAHGHSVYVIDMIKYIKEKMPDTFLTAGNVATPEAVRELENAGADATKVGVGPGKACITKLKTGFGTGGWQLAALRMCSKVARKPLIADGGIRHNGDIAKSVRFGASMVMIGSMLAGHEESPGNVIKIDGKTYKQYWGSASEVQKGAYRNVEGKQMLVPYRGSIANTLEEMKEDLQSSISYAGGRDLESIKRVDYVIVKNTIMNGDY.

The active-site Thioimidate intermediate is the C180. 209–232 (LIADGGIRHNGDIAKSVRFGASMV) serves as a coordination point for NADP(+).

It belongs to the IMPDH/GMPR family. GuaC type 2 subfamily.

The enzyme catalyses IMP + NH4(+) + NADP(+) = GMP + NADPH + 2 H(+). In terms of biological role, catalyzes the irreversible NADPH-dependent deamination of GMP to IMP. It functions in the conversion of nucleobase, nucleoside and nucleotide derivatives of G to A nucleotides, and in maintaining the intracellular balance of A and G nucleotides. In Lactobacillus delbrueckii subsp. bulgaricus (strain ATCC BAA-365 / Lb-18), this protein is GMP reductase.